Here is a 238-residue protein sequence, read N- to C-terminus: Uroporphyrinogen-III C-methyltransferase (238 aa).

Residues proline 11, 87-89 (GGD), 117-118 (TS), and methionine 170 contribute to the S-adenosyl-L-homocysteine site.

The protein belongs to the precorrin methyltransferase family. Monomer.

It catalyses the reaction uroporphyrinogen III + 2 S-adenosyl-L-methionine = precorrin-2 + 2 S-adenosyl-L-homocysteine + H(+). It participates in cofactor biosynthesis; adenosylcobalamin biosynthesis; precorrin-2 from uroporphyrinogen III: step 1/1. The protein operates within porphyrin-containing compound metabolism; siroheme biosynthesis; precorrin-2 from uroporphyrinogen III: step 1/1. With respect to regulation, SUMT exhibits a substrate inhibition phenomenon at uroporphyrinogen III concentrations above 0.5 uM; this property might play a regulatory role in cobalamin biosynthesis. In terms of biological role, catalyzes the two successive C-2 and C-7 methylation reactions involved in the conversion of uroporphyrinogen III to precorrin-2 via the intermediate formation of precorrin-1. It is a step in the biosynthesis of both cobalamin (vitamin B12) and siroheme. The sequence is that of Uroporphyrinogen-III C-methyltransferase from Priestia megaterium (Bacillus megaterium).